A 147-amino-acid polypeptide reads, in one-letter code: Cyanate hydratase (147 aa).

Active-site residues include R88, E91, and S114.

This sequence belongs to the cyanase family.

The enzyme catalyses cyanate + hydrogencarbonate + 3 H(+) = NH4(+) + 2 CO2. In terms of biological role, catalyzes the reaction of cyanate with bicarbonate to produce ammonia and carbon dioxide. The protein is Cyanate hydratase of Ralstonia pickettii (strain 12J).